We begin with the raw amino-acid sequence, 447 residues long: UDP-N-acetylmuramate--L-alanine ligase (447 aa).

Position 108–114 (108–114 (GSHGKTS)) interacts with ATP.

The protein belongs to the MurCDEF family.

The protein resides in the cytoplasm. The catalysed reaction is UDP-N-acetyl-alpha-D-muramate + L-alanine + ATP = UDP-N-acetyl-alpha-D-muramoyl-L-alanine + ADP + phosphate + H(+). The protein operates within cell wall biogenesis; peptidoglycan biosynthesis. Functionally, cell wall formation. This chain is UDP-N-acetylmuramate--L-alanine ligase, found in Listeria monocytogenes serotype 4a (strain HCC23).